Reading from the N-terminus, the 510-residue chain is Inositol-3-phosphate synthase (510 aa).

NAD(+)-binding residues include glycine 70, glycine 71, asparagine 72, asparagine 73, aspartate 143, isoleucine 180, glutamine 190, arginine 193, threonine 230, alanine 231, asparagine 232, threonine 233, glycine 281, serine 282, aspartate 306, serine 309, asparagine 340, asparagine 341, aspartate 342, lysine 355, glycine 393, aspartate 394, aspartate 422, and serine 423.

Belongs to the myo-inositol 1-phosphate synthase family. The cofactor is NAD(+).

It is found in the cytoplasm. It localises to the cytosol. The protein resides in the nucleus. It catalyses the reaction D-glucose 6-phosphate = 1D-myo-inositol 3-phosphate. It functions in the pathway polyol metabolism; myo-inositol biosynthesis; myo-inositol from D-glucose 6-phosphate: step 1/2. Key enzyme in myo-inositol biosynthesis pathway that catalyzes the conversion of glucose 6-phosphate to 1-myo-inositol 1-phosphate in a NAD-dependent manner. The polypeptide is Inositol-3-phosphate synthase (INPS1) (Nicotiana paniculata).